Consider the following 195-residue polypeptide: Granulocyte colony-stimulating factor (195 aa).

The signal sequence occupies residues methionine 1 to alanine 21. 2 cysteine pairs are disulfide-bonded: cysteine 57–cysteine 63 and cysteine 85–cysteine 95. O-linked (GalNAc...) threonine glycosylation is present at threonine 154.

This sequence belongs to the IL-6 superfamily. As to quaternary structure, monomer. Post-translationally, O-glycosylated.

The protein resides in the secreted. Functionally, granulocyte/macrophage colony-stimulating factors are cytokines that act in hematopoiesis by controlling the production, differentiation, and function of 2 related white cell populations of the blood, the granulocytes and the monocytes-macrophages. This CSF induces granulocytes. This is Granulocyte colony-stimulating factor (CSF3) from Bos taurus (Bovine).